The following is a 167-amino-acid chain: MAKEQQVQANDLQEKLIAVNRVSKTVKGGRIMSFTALTVVGDGNGRVGFGYGKAREVPAAIQKAMEKARRSMVTIALNEGTLHHPVKGRHSGSKVYMQPAAEGTGVIAGGAMRAVLEVAGVHNVLSKAYGSTNPINIVRATIDALVDVKSPEMVAAKRGLTVEAISE.

Residues Leu-12–Ile-75 enclose the S5 DRBM domain.

It belongs to the universal ribosomal protein uS5 family. As to quaternary structure, part of the 30S ribosomal subunit. Contacts proteins S4 and S8.

Functionally, with S4 and S12 plays an important role in translational accuracy. In terms of biological role, located at the back of the 30S subunit body where it stabilizes the conformation of the head with respect to the body. In Vibrio cholerae serotype O1 (strain ATCC 39541 / Classical Ogawa 395 / O395), this protein is Small ribosomal subunit protein uS5.